Consider the following 566-residue polypeptide: 5'-AMP-activated protein kinase subunit gamma-2 (566 aa).

The tract at residues 1–198 (MGSAAMDTKK…SRIYASSSPP (198 aa)) is disordered. Low complexity predominate over residues 15–25 (SSPGGSSGKKN). Residues 54-64 (NSEKHSSRKVD) are compositionally biased toward basic and acidic residues. 9 positions are modified to phosphoserine: serine 65, serine 71, serine 73, serine 90, serine 138, serine 143, serine 158, serine 161, and serine 162. Composition is skewed to low complexity over residues 132 to 144 (KESSPNSNPSTSP) and 156 to 172 (TSSVSSSPSTPTQVTKQ). At threonine 165 the chain carries Phosphothreonine. Over residues 180–189 (YKQEPERPES) the composition is skewed to basic and acidic residues. Serine 196 bears the Phosphoserine mark. CBS domains lie at 272-332 (PTSS…KSPM), 354-412 (TFKP…MSDM), and 427-489 (IGTY…NLDI). ADP contacts are provided by residues arginine 299, 314–319 (MLTITD), valine 359, 380–381 (HR), and lysine 399. AMP is bound by residues arginine 299, 314-319 (MLTITD), valine 359, histidine 380, 380-381 (HR), lysine 399, threonine 429, alanine 434, 455-456 (SA), 471-474 (SKFD), arginine 498, histidine 527, 527-528 (HR), and 543-546 (SLSD). Residues arginine 299, 314–319 (MLTITD), valine 359, 380–381 (HR), arginine 381, and lysine 399 each bind ATP. The short motif at 367–388 (LFDAVYSLIKNKIHRLPVIDPI) is the AMPK pseudosubstrate element. ADP-binding positions include 471 to 474 (SKFD), arginine 498, and 527 to 528 (HR). ATP-binding positions include 471 to 474 (SKFD), arginine 498, and 527 to 528 (HR). Positions 501 to 559 (YFEGVVKCSKLETLETIVDRIVRAEVHRLVVVNEADSIVGIISLSDILQALILTPAGAK) constitute a CBS 4 domain.

The protein belongs to the 5'-AMP-activated protein kinase gamma subunit family. In terms of assembly, AMPK is a heterotrimer of an alpha catalytic subunit (PRKAA1 or PRKAA2), a beta (PRKAB1 or PRKAB2) and a gamma non-catalytic subunits (PRKAG1, PRKAG2 or PRKAG3). Interacts with FNIP1 and FNIP2. In terms of processing, phosphorylated by ULK1; leading to negatively regulate AMPK activity and suggesting the existence of a regulatory feedback loop between ULK1 and AMPK. Post-translationally, glycosylated; O-GlcNAcylated by OGT, promoting the AMP-activated protein kinase (AMPK) activity.

Functionally, AMP/ATP-binding subunit of AMP-activated protein kinase (AMPK), an energy sensor protein kinase that plays a key role in regulating cellular energy metabolism. In response to reduction of intracellular ATP levels, AMPK activates energy-producing pathways and inhibits energy-consuming processes: inhibits protein, carbohydrate and lipid biosynthesis, as well as cell growth and proliferation. AMPK acts via direct phosphorylation of metabolic enzymes, and by longer-term effects via phosphorylation of transcription regulators. Also acts as a regulator of cellular polarity by remodeling the actin cytoskeleton; probably by indirectly activating myosin. Gamma non-catalytic subunit mediates binding to AMP, ADP and ATP, leading to activate or inhibit AMPK: AMP-binding results in allosteric activation of alpha catalytic subunit (PRKAA1 or PRKAA2) both by inducing phosphorylation and preventing dephosphorylation of catalytic subunits. ADP also stimulates phosphorylation, without stimulating already phosphorylated catalytic subunit. ATP promotes dephosphorylation of catalytic subunit, rendering the AMPK enzyme inactive. This is 5'-AMP-activated protein kinase subunit gamma-2 (Prkag2) from Mus musculus (Mouse).